We begin with the raw amino-acid sequence, 511 residues long: Kinesin-like protein 8 (511 aa).

A Kinesin motor domain is found at 5 to 356 (NVRVIVRVRP…LRYSEAARRI (352 aa)). 107 to 114 (GQKGTGKT) provides a ligand contact to ATP. Ser278, Ser279, Ser284, and Ser456 each carry phosphoserine. Residues 373–489 (EGELDDILTT…KLVKSQLHDY (117 aa)) are a coiled coil.

This sequence belongs to the TRAFAC class myosin-kinesin ATPase superfamily. Kinesin family.

It localises to the cytoplasm. The protein localises to the cytoskeleton. This chain is Kinesin-like protein 8 (klp8), found in Schizosaccharomyces pombe (strain 972 / ATCC 24843) (Fission yeast).